Reading from the N-terminus, the 403-residue chain is Dynactin subunit 2-B (403 aa).

The disordered stretch occupies residues 1-26 (MADPKYADLPGIARNEPDLYETSDLP). Positions 99–132 (PQQKYQRLLHEVQELTQEVEKTQSTLKESATEEK) form a coiled coil. The segment at 183-206 (AAKTRKDPEGKSSAKGPGPDNENL) is disordered. Basic and acidic residues predominate over residues 184–194 (AKTRKDPEGKS). Positions 381-401 (KENLATVEDNFSSIDGRIKKL) form a coiled coil.

It belongs to the dynactin subunit 2 family. Subunit of dynactin, a multiprotein complex part of a tripartite complex with dynein and a adapter, such as BICDL1, BICD2 or HOOK3. The dynactin complex is built around ACTR1A/ACTB filament and consists of an actin-related filament composed of a shoulder domain, a pointed end and a barbed end. Its length is defined by its flexible shoulder domain. The soulder is composed of 2 DCTN1 subunits, 4 DCTN2 and 2 DCTN3.

The protein localises to the cytoplasm. It localises to the cytoskeleton. Its subcellular location is the microtubule organizing center. It is found in the centrosome. The protein resides in the membrane. Its function is as follows. Part of the dynactin complex that activates the molecular motor dynein for ultra-processive transport along microtubules. In the dynactin soulder domain, binds the ACTR1A filament and acts as a molecular ruler to determine the length. Modulates cytoplasmic dynein binding to an organelle, and plays a role in prometaphase chromosome alignment and spindle organization during mitosis. Involved in anchoring microtubules to centrosomes. This Xenopus laevis (African clawed frog) protein is Dynactin subunit 2-B (dctn2-b).